The sequence spans 618 residues: 2-succinyl-5-enolpyruvyl-6-hydroxy-3-cyclohexene-1-carboxylate synthase (618 aa).

A disordered region spans residues 192–215; that stretch reads DPVAERGRDGPYVDVTPGSPEPGD.

This sequence belongs to the TPP enzyme family. MenD subfamily. As to quaternary structure, homodimer. Mg(2+) is required as a cofactor. The cofactor is Mn(2+). It depends on thiamine diphosphate as a cofactor.

The enzyme catalyses isochorismate + 2-oxoglutarate + H(+) = 5-enolpyruvoyl-6-hydroxy-2-succinyl-cyclohex-3-ene-1-carboxylate + CO2. It functions in the pathway quinol/quinone metabolism; 1,4-dihydroxy-2-naphthoate biosynthesis; 1,4-dihydroxy-2-naphthoate from chorismate: step 2/7. It participates in quinol/quinone metabolism; menaquinone biosynthesis. Catalyzes the thiamine diphosphate-dependent decarboxylation of 2-oxoglutarate and the subsequent addition of the resulting succinic semialdehyde-thiamine pyrophosphate anion to isochorismate to yield 2-succinyl-5-enolpyruvyl-6-hydroxy-3-cyclohexene-1-carboxylate (SEPHCHC). This is 2-succinyl-5-enolpyruvyl-6-hydroxy-3-cyclohexene-1-carboxylate synthase from Halorubrum lacusprofundi (strain ATCC 49239 / DSM 5036 / JCM 8891 / ACAM 34).